We begin with the raw amino-acid sequence, 444 residues long: Phosphoribosylamine--glycine ligase (444 aa).

The 216-residue stretch at 109-324 (RNLFKKYEID…FLDVCFAIAE (216 aa)) folds into the ATP-grasp domain. 140–202 (MTSLGKDVVV…EEKLVGVEFT (63 aa)) lines the ATP pocket. Mg(2+)-binding residues include glutamine 282, glutamate 294, and asparagine 296. Mn(2+)-binding residues include glutamine 282, glutamate 294, and asparagine 296.

The protein belongs to the GARS family. The cofactor is Mg(2+). Mn(2+) serves as cofactor.

The catalysed reaction is 5-phospho-beta-D-ribosylamine + glycine + ATP = N(1)-(5-phospho-beta-D-ribosyl)glycinamide + ADP + phosphate + H(+). It participates in purine metabolism; IMP biosynthesis via de novo pathway; N(1)-(5-phospho-D-ribosyl)glycinamide from 5-phospho-alpha-D-ribose 1-diphosphate: step 2/2. The sequence is that of Phosphoribosylamine--glycine ligase from Methanococcus maripaludis (strain C7 / ATCC BAA-1331).